A 222-amino-acid polypeptide reads, in one-letter code: MRLHSVLAVATAVGCAVAHDPVVQVPMCPWNAVINFDKTVPDQKPFPQTTIRLCYNSKTLSLKFEAKDEKYFYFDPSQKINDDIWKYEVMEAFISTGHADPSTYLEFEVSPNNVTYQAFVYNPSKNRTDGAPFDHAFISNPIADGITSKTSLAQTQGKWTSNVQIPLALFNVDTPQGSKWRMNFFRTVTSKETYPDQILGAWNSPDKASFHITSFFRKIVFV.

Residues 1–18 (MRLHSVLAVATAVGCAVA) form the signal peptide. N113 and N126 each carry an N-linked (GlcNAc...) asparagine glycan.

It localises to the secreted. This Arthroderma benhamiae (strain ATCC MYA-4681 / CBS 112371) (Trichophyton mentagrophytes) protein is Extracellular protein ARB_03106.